We begin with the raw amino-acid sequence, 142 residues long: MRRQSQRGFTLLEIMVVIVIMGILASLVVPNLMGNKDKADRQKVVSDIVALESALDMYKLDNSRYPTTEQGLQALITKPSVPPEARYYPQDGYIRRLPQDPWGGDYQLVSPGQHGQIDIFSSGQDGVPGTDDDIGNWTLSKK.

Positions 1 to 8 are cleaved as a propeptide — leader sequence; that stretch reads MRRQSQRG. Residue Phe-9 is modified to N-methylphenylalanine. Residues 9 to 29 traverse the membrane as a helical segment; sequence FTLLEIMVVIVIMGILASLVV. The segment at 122 to 142 is disordered; that stretch reads SGQDGVPGTDDDIGNWTLSKK.

Belongs to the GSP G family. Type II secretion system is composed of four main components: the outer membrane complex, the inner membrane complex, the cytoplasmic secretion ATPase and the periplasm-spanning pseudopilus. Forms homomultimers. Post-translationally, cleaved by the prepilin peptidase. Methylated by prepilin peptidase at the amino group of the N-terminal phenylalanine once the leader sequence is cleaved.

It localises to the cell inner membrane. Its function is as follows. Core component of the type II secretion system required for the energy-dependent secretion of extracellular factors such as proteases and toxins from the periplasm. Pseudopilin (pilin-like) protein that polymerizes to form the pseudopilus. Further polymerization triggers pseudopilus growth. In Klebsiella michiganensis (strain ATCC 8724 / DSM 4798 / JCM 20051 / NBRC 3318 / NRRL B-199 / KCTC 1686 / BUCSAV 143 / CCM 1901), this protein is Type II secretion system core protein G.